Reading from the N-terminus, the 338-residue chain is Large ribosomal subunit protein uL10 (338 aa).

Residues 309-327 (KAEVEEAKEEEKEEKKEEA) are compositionally biased toward basic and acidic residues. The tract at residues 309-338 (KAEVEEAKEEEKEEKKEEAAPAAAGLGLLF) is disordered.

It belongs to the universal ribosomal protein uL10 family. In terms of assembly, part of the 50S ribosomal subunit. Forms part of the ribosomal stalk which helps the ribosome interact with GTP-bound translation factors. Forms a heptameric L10(L12)2(L12)2(L12)2 complex, where L10 forms an elongated spine to which the L12 dimers bind in a sequential fashion.

Functionally, forms part of the ribosomal stalk, playing a central role in the interaction of the ribosome with GTP-bound translation factors. The protein is Large ribosomal subunit protein uL10 of Methanothermococcus thermolithotrophicus (Methanococcus thermolithotrophicus).